A 327-amino-acid chain; its full sequence is Polyprenyl transferase andD (327 aa).

A run of 8 helical transmembrane segments spans residues 49 to 69 (LGYI…ASIA), 81 to 101 (ITLL…WDDI), 140 to 160 (FAFV…MLFF), 174 to 194 (PQLI…GLNL), 201 to 221 (IPMA…DIIY), 244 to 264 (CLDA…VIAG), 271 to 291 (APFF…LAMA), and 307 to 327 (CCTS…VWRS).

This sequence belongs to the UbiA prenyltransferase family. Mg(2+) serves as cofactor.

The protein resides in the membrane. It participates in secondary metabolite biosynthesis; terpenoid biosynthesis. Polyprenyl transferase; part of the gene cluster that mediates the biosynthesis of anditomin, a fungal meroterpenoid. The first step of the pathway is the synthesis of 3,5-dimethylorsellinic acid (DMOA) by the polyketide synthase andM. DMOA is then converted to the phthalide compound 5,7-dihydroxy-4,6-dimethylphthalide (DHDMP) by the cytochrome P450 monooxygenase andK, which is further prenylated by the prenyltransferase andD to yield farnesyl-DHDMP. Further epoxidation by the FAD-dependent monooxygenase andE leads to epoxyfarnesyl-DHDMP. The next step involves the terpene cyclase andB that converts epoxyfarnesyl-DHDMP into preandiloid A through opening of the epoxide ring followed by the cyclization of the farnesyl moiety. Preandiloid A is in turn oxidized at the C-3 hydroxyl group to yield preandiloid B by the dehydrogenase andC. The dioxygenase andA is solely responsible for the dehydrogenation of preandiloid B leading to the enone preandiloid C, as well as for the intriguing structural rearrangement to generate the bicyclo[2.2.2]octane core, transforming preandiloid C into andiconin. FAD-binding monooxygenase andJ then produces andilesin D which is reduced by dehydrogenase andI to yield andilesin A. Action of acetyltransferase andG followed by a spontaneous acetate elimination leads then to andilesin B, which is in turn substrate of the short chain dehydrogenase andH to yield andilesin C. Finally, the dioxygenase andF catalyzes the transformation of andilesin C to anditomin. This Emericella variicolor (Aspergillus stellatus) protein is Polyprenyl transferase andD.